Reading from the N-terminus, the 451-residue chain is Exodeoxyribonuclease 7 large subunit (451 aa).

The protein belongs to the XseA family. As to quaternary structure, heterooligomer composed of large and small subunits.

Its subcellular location is the cytoplasm. It catalyses the reaction Exonucleolytic cleavage in either 5'- to 3'- or 3'- to 5'-direction to yield nucleoside 5'-phosphates.. Its function is as follows. Bidirectionally degrades single-stranded DNA into large acid-insoluble oligonucleotides, which are then degraded further into small acid-soluble oligonucleotides. The sequence is that of Exodeoxyribonuclease 7 large subunit from Thiobacillus denitrificans (strain ATCC 25259 / T1).